Reading from the N-terminus, the 876-residue chain is Pre-mRNA-splicing factor ATP-dependent RNA helicase-like protein PRP2 (876 aa).

The segment at 1–111 is disordered; sequence MSSITSETGK…KGLLGDSENE (111 aa). At serine 2 the chain carries N-acetylserine. A compositionally biased stretch (polar residues) spans 61 to 70; the sequence is VFSNTNQGPE. Residues 233 to 399 form the Helicase ATP-binding domain; it reads LQEIKKNQVL…FDNCPIFNVP (167 aa). Position 246–253 (246–253) interacts with ATP; the sequence is GETGSGKT. The short motif at 346-349 is the DEAH box element; sequence DEAH. Residues 424–598 enclose the Helicase C-terminal domain; it reads TIFQIHTTQS…NTVLLLLSLG (175 aa).

The protein belongs to the DEAD box helicase family. DEAH subfamily. Interacts directly with pre-mRNA. According to PubMed:2251118, associated with spliceosomes prior to and throughout step 1 of the splicing reaction. According to PubMed:8943336, it leaves the spliceosome before reaction 1. Interacts with SPP2.

The protein localises to the nucleus. The enzyme catalyses ATP + H2O = ADP + phosphate + H(+). Its function is as follows. Involved in pre-mRNA splicing. Is required together with ATP and at least one other factor, for the first cleavage-ligation reaction. Functions as a molecular motor in the activation of the precatalytic spliceosome for the first transesterification reaction of pre-mRNA splicing by hydrolyzing ATP to cause the activation of the spliceosome without the occurrence of splicing. Capable of hydrolyzing nucleoside triphosphates in the presence of single-stranded RNAs such as poly(U). In Saccharomyces cerevisiae (strain ATCC 204508 / S288c) (Baker's yeast), this protein is Pre-mRNA-splicing factor ATP-dependent RNA helicase-like protein PRP2 (PRP2).